The chain runs to 444 residues: Trigger factor (444 aa).

A PPIase FKBP-type domain is found at G166–A251.

It belongs to the FKBP-type PPIase family. Tig subfamily.

It is found in the cytoplasm. It carries out the reaction [protein]-peptidylproline (omega=180) = [protein]-peptidylproline (omega=0). In terms of biological role, involved in protein export. Acts as a chaperone by maintaining the newly synthesized protein in an open conformation. Functions as a peptidyl-prolyl cis-trans isomerase. This chain is Trigger factor, found in Cereibacter sphaeroides (strain ATCC 17025 / ATH 2.4.3) (Rhodobacter sphaeroides).